The primary structure comprises 126 residues: MAGSAPEALLVGLGAIPGAWLRLKVVNHFEPMVPKKHWGTLLVNVISSFALGLVLALDETCSASSGIALLMGVGFFGTLSTFSTFVVELLNELRAGHLLAAAALAVISIVAGLIAAAAGYGLGAYG.

Helical transmembrane passes span 37–57 (HWGT…VLAL), 67–87 (IALL…TFVV), and 98–118 (LLAA…AAAA). Residues Gly-77 and Ser-80 each coordinate Na(+).

The protein belongs to the fluoride channel Fluc/FEX (TC 1.A.43) family.

It is found in the cell inner membrane. It carries out the reaction fluoride(in) = fluoride(out). With respect to regulation, na(+) is not transported, but it plays an essential structural role and its presence is essential for fluoride channel function. Fluoride-specific ion channel. Important for reducing fluoride concentration in the cell, thus reducing its toxicity. The protein is Fluoride-specific ion channel FluC 1 of Parasynechococcus marenigrum (strain WH8102).